We begin with the raw amino-acid sequence, 347 residues long: NADH-ubiquinone oxidoreductase chain 2 (347 aa).

Helical transmembrane passes span 4 to 21 (LALI…VIVM), 26 to 44 (WLLV…IPVL), 59 to 79 (YFLT…TNLL), 93 to 115 (LAST…HFWV), 149 to 169 (LNLN…GWGG), 178 to 198 (ILAY…TYNP), 200 to 220 (LTLL…MLFM), 241 to 261 (ATSV…SGFL), 274 to 294 (ESIF…YFYM), and 323 to 343 (TPLL…APIL).

It belongs to the complex I subunit 2 family. In terms of assembly, core subunit of respiratory chain NADH dehydrogenase (Complex I) which is composed of 45 different subunits. Interacts with TMEM242.

It is found in the mitochondrion inner membrane. It catalyses the reaction a ubiquinone + NADH + 5 H(+)(in) = a ubiquinol + NAD(+) + 4 H(+)(out). In terms of biological role, core subunit of the mitochondrial membrane respiratory chain NADH dehydrogenase (Complex I) which catalyzes electron transfer from NADH through the respiratory chain, using ubiquinone as an electron acceptor. Essential for the catalytic activity and assembly of complex I. The protein is NADH-ubiquinone oxidoreductase chain 2 of Cardioderma cor (Heart-nosed bat).